Reading from the N-terminus, the 400-residue chain is Probable protein phosphatase 2C 64 (400 aa).

The PPM-type phosphatase domain maps to 47–355 (DFSMAVVQAN…DDITVIVVFF (309 aa)). Phosphoserine is present on Ser75. Residues Asp86, Gly87, Asp287, and Asp346 each coordinate Mn(2+).

The protein belongs to the PP2C family. In terms of assembly, interacts with SAUR19. Mg(2+) is required as a cofactor. Requires Mn(2+) as cofactor.

The catalysed reaction is O-phospho-L-seryl-[protein] + H2O = L-seryl-[protein] + phosphate. It carries out the reaction O-phospho-L-threonyl-[protein] + H2O = L-threonyl-[protein] + phosphate. Functionally, dephosphorylates and represses plasma membrane H(+)-ATPases (PM H(+)-ATPases, e.g. AHA1 and AHA2), thus influencing negatively plant growth and fitness. The polypeptide is Probable protein phosphatase 2C 64 (Arabidopsis thaliana (Mouse-ear cress)).